Here is a 353-residue protein sequence, read N- to C-terminus: Vomeronasal type-1 receptor 1 (353 aa).

The Extracellular segment spans residues 1 to 56; it reads MVGDTLKLLSPLMTRYFFLLFYSTDSSDLNENQHPLDFDEMAFGKVKSGISFLIQT. The helical transmembrane segment at 57–77 threads the bilayer; the sequence is GVGILGNSFLLCFYNLILFTG. The Cytoplasmic portion of the chain corresponds to 78–84; the sequence is HKLRPTD. A helical membrane pass occupies residues 85–105; the sequence is LILSHLALANSMVLFFKGIPQ. At 106–132 the chain is on the extracellular side; sequence TMAAFGLKYLLNDTGCKFVFYYHRVGT. N-linked (GlcNAc...) asparagine glycosylation occurs at Asn117. Residues 133 to 153 traverse the membrane as a helical segment; it reads RVSLSTICLLNGFQAIKLNPS. Topologically, residues 154-169 are cytoplasmic; it reads ICRWMEIKIRSPRFID. Residues 170–190 traverse the membrane as a helical segment; the sequence is FCCLLCWVPHVLMNASVLLLV. Over 191-226 the chain is Extracellular; it reads NGPLNSKNSSAKNNYGYCSYKASKRFSSLHAVLYFS. The N-linked (GlcNAc...) asparagine glycan is linked to Asn198. Residues 227–247 form a helical membrane-spanning segment; that stretch reads PDFMSLGFMVWASGSMVFFLY. At 248 to 274 the chain is on the cytoplasmic side; it reads RHKQQVQHNHSNRLSCRPSQETRATRT. A helical membrane pass occupies residues 275-295; that stretch reads IMVLVSSFFVFYSVHSFLTIW. The Extracellular segment spans residues 296–303; the sequence is TTVVANPG. Residues 304-324 form a helical membrane-spanning segment; that stretch reads QWIVNNSVLVASYFPSRSPFV. Residues 325-353 lie on the Cytoplasmic side of the membrane; it reads LIMSDTRISQFCFACRTRKTLFPNLVVMP.

This sequence belongs to the G-protein coupled receptor 1 family.

The protein localises to the cell membrane. In terms of biological role, putative pheromone receptor. The sequence is that of Vomeronasal type-1 receptor 1 (VN1R1) from Gorilla gorilla gorilla (Western lowland gorilla).